We begin with the raw amino-acid sequence, 225 residues long: E3 ubiquitin-protein ligase ATL59 (225 aa).

The chain crosses the membrane as a helical span at residues 22–42; the sequence is FTFIVCVPICVILIVLLVLYI. The RING-type; atypical zinc-finger motif lies at 97–139; sequence CSVCLGDYQAEEKLQQMPSCGHTFHMECIDLWLTSHTTCPLCR.

It belongs to the RING-type zinc finger family. ATL subfamily.

It localises to the membrane. The enzyme catalyses S-ubiquitinyl-[E2 ubiquitin-conjugating enzyme]-L-cysteine + [acceptor protein]-L-lysine = [E2 ubiquitin-conjugating enzyme]-L-cysteine + N(6)-ubiquitinyl-[acceptor protein]-L-lysine.. Its pathway is protein modification; protein ubiquitination. E3 ubiquitin-protein ligase able to catalyze polyubiquitination with ubiquitin-conjugating enzyme E2 UBC8, UBC10, UBC11, and UBC34 in vitro. The sequence is that of E3 ubiquitin-protein ligase ATL59 (ATL59) from Arabidopsis thaliana (Mouse-ear cress).